We begin with the raw amino-acid sequence, 306 residues long: Choline-binding protein (306 aa).

An N-terminal signal peptide occupies residues Met1–Gly22. Cys23 is lipidated: N-palmitoyl cysteine. Cys23 carries S-diacylglycerol cysteine lipidation.

Belongs to the OsmX family.

It localises to the cell membrane. Member of a high affinity multicomponent binding-protein-dependent transport system for choline. This chain is Choline-binding protein (opuBC), found in Bacillus subtilis (strain 168).